A 244-amino-acid polypeptide reads, in one-letter code: Putative quercetin 2,3-dioxygenase Mb0187c (244 aa).

His60, His62, His104, and Glu106 together coordinate a divalent metal cation.

The protein belongs to the pirin family. A divalent metal cation serves as cofactor.

The enzyme catalyses quercetin + O2 = 2-(3,4-dihydroxybenzoyloxy)-4,6-dihydroxybenzoate + CO. It functions in the pathway flavonoid metabolism; quercetin degradation. Its function is as follows. Putative quercetin 2,3-dioxygenase. In Mycobacterium bovis (strain ATCC BAA-935 / AF2122/97), this protein is Putative quercetin 2,3-dioxygenase Mb0187c.